Here is a 323-residue protein sequence, read N- to C-terminus: Acetyl-coenzyme A carboxylase carboxyl transferase subunit alpha (323 aa).

Residues 40–293 (LSEKSLQLTK…RKALSDSLKT (254 aa)) form the CoA carboxyltransferase C-terminal domain.

This sequence belongs to the AccA family. Acetyl-CoA carboxylase is a heterohexamer composed of biotin carboxyl carrier protein (AccB), biotin carboxylase (AccC) and two subunits each of ACCase subunit alpha (AccA) and ACCase subunit beta (AccD).

It is found in the cytoplasm. It catalyses the reaction N(6)-carboxybiotinyl-L-lysyl-[protein] + acetyl-CoA = N(6)-biotinyl-L-lysyl-[protein] + malonyl-CoA. The protein operates within lipid metabolism; malonyl-CoA biosynthesis; malonyl-CoA from acetyl-CoA: step 1/1. Functionally, component of the acetyl coenzyme A carboxylase (ACC) complex. First, biotin carboxylase catalyzes the carboxylation of biotin on its carrier protein (BCCP) and then the CO(2) group is transferred by the carboxyltransferase to acetyl-CoA to form malonyl-CoA. This chain is Acetyl-coenzyme A carboxylase carboxyl transferase subunit alpha, found in Polynucleobacter asymbioticus (strain DSM 18221 / CIP 109841 / QLW-P1DMWA-1) (Polynucleobacter necessarius subsp. asymbioticus).